A 417-amino-acid chain; its full sequence is Transmembrane protease serine 11D (417 aa).

Residues 1 to 17 (MYRPRSMVSPSRFFNPF) lie on the Cytoplasmic side of the membrane. The helical; Signal-anchor for type II membrane protein transmembrane segment at 18–38 (MVALIVIITVGLLAMTAGLLI) threads the bilayer. Topologically, residues 39–417 (HFLAFDKRAY…RNWIRQQTGI (379 aa)) are extracellular. Residues 46–162 (RAYFYHSNFH…SNGITSLTDQ (117 aa)) enclose the SEA domain. Disulfide bonds link Cys172–Cys291, Cys211–Cys227, Cys336–Cys352, and Cys363–Cys392. The Peptidase S1 domain maps to 186 to 416 (IIGGTQAETG…YRNWIRQQTG (231 aa)). Catalysis depends on charge relay system residues His226 and Asp271. Ser367 (charge relay system) is an active-site residue.

Belongs to the peptidase S1 family. In terms of assembly, monomer. In terms of tissue distribution, isoform 1 and isoform 2 are expressed in the esophagus, tongue and trachea. Isoform 2 is also highly expressed in the adrenal cortex and heart.

The protein localises to the cell membrane. Its subcellular location is the secreted. Its function is as follows. May play some biological role in the host defense system on the mucous membrane independently of or in cooperation with other substances in airway mucous or bronchial secretions. Plays a role in the proteolytic processing of ACE2. Preferentially cleaves the C-terminal side of arginine residues at the P1 position of certain peptides. Isoform 2 may play a key role in regulating adrenal proliferation by specifically cleaving N-POMC. This chain is Transmembrane protease serine 11D (Tmprss11d), found in Rattus norvegicus (Rat).